A 445-amino-acid chain; its full sequence is Questin oxidase (445 aa).

The protein belongs to the questin oxidase family. NADPH serves as cofactor. In terms of tissue distribution, specifically expressed in conidia.

Its pathway is secondary metabolite biosynthesis. Questin oxidase; part of the gene cluster that mediates the biosynthesis of trypacidin, a mycotoxin with antiprotozoal activity and that plays a role in the infection process. The pathway begins with the synthesis of atrochrysone thioester by the polyketide synthase (PKS) tpcC. The atrochrysone carboxyl ACP thioesterase tpcB then breaks the thioester bond and releases the atrochrysone carboxylic acid from tpcC. The decarboxylase tpcK converts atrochrysone carboxylic acid to atrochrysone which is further reduced into emodin anthrone. The next step is performed by the emodin anthrone oxygenase tpcL that catalyzes the oxidation of emodinanthrone to emodin. Emodin O-methyltransferase encoded by tpcA catalyzes methylation of the 8-hydroxy group of emodin to form questin. Ring cleavage of questin by questin oxidase tpcI leads to desmethylsulochrin via several intermediates including questin epoxide. Another methylation step catalyzed by tpcM leads to the formation of sulochrin which is further converted to monomethylsulfochrin by tpcH. Finally, the tpcJ catalyzes the conversion of monomethylsulfochrin to trypacidin. Trypacidin is toxic for human pulmonary and bronchial epithelial cells by initiating the intracellular formation of nitric oxide (NO) and hydrogen peroxide (H(2)O(2)), thus triggering host necrotic cell death. The trypacidin pathway is also able to produce endocrocin via a distinct route from the endocrocin Enc pathway. The sequence is that of Questin oxidase from Aspergillus fumigatus (strain ATCC MYA-4609 / CBS 101355 / FGSC A1100 / Af293) (Neosartorya fumigata).